The chain runs to 840 residues: Leucine--tRNA ligase (840 aa).

A 'HIGH' region motif is present at residues 44–55 (PYPSANGLHVGH). Positions 617-621 (KMSKS) match the 'KMSKS' region motif. Lys-620 is a binding site for ATP.

The protein belongs to the class-I aminoacyl-tRNA synthetase family.

It is found in the cytoplasm. The catalysed reaction is tRNA(Leu) + L-leucine + ATP = L-leucyl-tRNA(Leu) + AMP + diphosphate. This chain is Leucine--tRNA ligase, found in Borrelia garinii subsp. bavariensis (strain ATCC BAA-2496 / DSM 23469 / PBi) (Borreliella bavariensis).